A 66-amino-acid chain; its full sequence is U10-theraphotoxin-Cg1a 1 (66 aa).

The signal sequence occupies residues 1–21 (MKTSVLFVIFGLALLFCLSFA). Residues 22 to 29 (AELEDTGR) constitute a propeptide that is removed on maturation. 3 cysteine pairs are disulfide-bonded: Cys-31–Cys-46, Cys-38–Cys-51, and Cys-45–Cys-58.

The protein belongs to the neurotoxin 10 (Hwtx-1) family. 29 (Jztx-13) subfamily. As to expression, expressed by the venom gland.

It is found in the secreted. Probable ion channel inhibitor. This chain is U10-theraphotoxin-Cg1a 1, found in Chilobrachys guangxiensis (Chinese earth tiger tarantula).